The primary structure comprises 220 residues: Large ribosomal subunit protein uL16 (220 aa).

The protein belongs to the universal ribosomal protein uL16 family. Component of the small ribosomal subunit. Mature ribosomes consist of a small (40S) and a large (60S) subunit. The 40S subunit contains about 33 different proteins and 1 molecule of RNA (18S). The 60S subunit contains about 49 different proteins and 3 molecules of RNA (25S, 5.8S and 5S).

This Vitis riparia (Frost grape) protein is Large ribosomal subunit protein uL16 (RPL10).